Reading from the N-terminus, the 113-residue chain is Hydrogenase maturation factor HybF (113 aa).

Ni(2+) is bound by residues H2 and E3. The Zn(2+) site is built by C73, C76, C89, and C92.

It belongs to the HypA/HybF family. HybF subfamily.

Involved in the maturation of [NiFe] hydrogenases. Required for nickel insertion into the metal center of the hydrogenase. In Klebsiella pneumoniae, this protein is Hydrogenase maturation factor HybF.